The chain runs to 312 residues: DNA primase small subunit PriS (312 aa).

Catalysis depends on residues Asp-88, Asp-90, and Asp-215.

The protein belongs to the eukaryotic-type primase small subunit family. As to quaternary structure, heterodimer of a small subunit (PriS) and a large subunit (PriL). It depends on Mg(2+) as a cofactor. Requires Mn(2+) as cofactor.

Catalytic subunit of DNA primase, an RNA polymerase that catalyzes the synthesis of short RNA molecules used as primers for DNA polymerase during DNA replication. The small subunit contains the primase catalytic core and has DNA synthesis activity on its own. Binding to the large subunit stabilizes and modulates the activity, increasing the rate of DNA synthesis while decreasing the length of the DNA fragments, and conferring RNA synthesis capability. The DNA polymerase activity may enable DNA primase to also catalyze primer extension after primer synthesis. May also play a role in DNA repair. This Pyrobaculum arsenaticum (strain DSM 13514 / JCM 11321 / PZ6) protein is DNA primase small subunit PriS.